Consider the following 318-residue polypeptide: Homoserine kinase (318 aa).

97 to 107 (PIGSGLGSSAC) serves as a coordination point for ATP.

This sequence belongs to the GHMP kinase family. Homoserine kinase subfamily.

The protein resides in the cytoplasm. The catalysed reaction is L-homoserine + ATP = O-phospho-L-homoserine + ADP + H(+). It participates in amino-acid biosynthesis; L-threonine biosynthesis; L-threonine from L-aspartate: step 4/5. Its function is as follows. Catalyzes the ATP-dependent phosphorylation of L-homoserine to L-homoserine phosphate. The protein is Homoserine kinase of Vibrio atlanticus (strain LGP32) (Vibrio splendidus (strain Mel32)).